A 250-amino-acid chain; its full sequence is MIENKVELVAELVLESIGKTEVVSRHTEGTKSCQVSFRIKDSPSEKGSTSFLSELVVIQTLDDNDKYTVVIRHGTSITMACVVGYSDFKLPTELKWPLERESLPVEPDLKPIMTQLKRQTAGSADMPKFDDEYQAQARQNQGTAPLNPYPGLTVTEPSFANPAGGYADGDLYPVGTSHPDWSGGLPNPLGNPSSQGGMIFDPNRRPAPRREDMPPGWMPGSKYDEPFGPGSGGFGGSGSGGFGGSGSGFI.

The segment at Pro179–Ile250 is disordered. Over residues Pro202–Met213 the composition is skewed to basic and acidic residues. A compositionally biased stretch (gly residues) spans Pro229–Ile250.

Belongs to the proteasome inhibitor PI31 family. Interacts with the 20S proteasome.

Functionally, plays a role in the establishment of transcriptional silencing boundaries, preventing the propagation of heterochromatic silencing. The chain is Silencing boundary-establishment protein FUB1 from Saccharomyces cerevisiae (strain ATCC 204508 / S288c) (Baker's yeast).